The chain runs to 160 residues: MIKISILCVGKLKEKYLAEGIKEYLKRLTPYAKVDISEVPDEPCPENAPMAIEEQVRQKEADKLAKKLRPGTFLVVLDLKGKMLSSEDMAGKIQDLALSGKSDLTFIIGGSIGLAPSLVERANLLLALSNLTFPHQLVRLLLMEQIYRWFKIIHNEPYHK.

S-adenosyl-L-methionine is bound by residues L77, G109, and 128 to 133 (LSNLTF).

It belongs to the RNA methyltransferase RlmH family. As to quaternary structure, homodimer.

It is found in the cytoplasm. It carries out the reaction pseudouridine(1915) in 23S rRNA + S-adenosyl-L-methionine = N(3)-methylpseudouridine(1915) in 23S rRNA + S-adenosyl-L-homocysteine + H(+). In terms of biological role, specifically methylates the pseudouridine at position 1915 (m3Psi1915) in 23S rRNA. The protein is Ribosomal RNA large subunit methyltransferase H of Desulforamulus reducens (strain ATCC BAA-1160 / DSM 100696 / MI-1) (Desulfotomaculum reducens).